Consider the following 478-residue polypeptide: Multidrug resistance outer membrane protein MdtQ (478 aa).

The N-terminal stretch at 1–21 (MNRDSFYPAIACFPLLLMLAG) is a signal peptide. Cysteine 22 carries N-palmitoyl cysteine lipidation. Cysteine 22 carries the S-diacylglycerol cysteine lipid modification.

This sequence belongs to the outer membrane factor (OMF) (TC 1.B.17) family.

It is found in the cell outer membrane. Its function is as follows. Could be involved in resistance to puromycin, acriflavine and tetraphenylarsonium chloride. The sequence is that of Multidrug resistance outer membrane protein MdtQ (mdtQ) from Escherichia coli O6:H1 (strain CFT073 / ATCC 700928 / UPEC).